A 1171-amino-acid chain; its full sequence is Myosin-B/C (1171 aa).

The region spanning 105-780 (ETVDDIGYLP…AAKELSILQR (676 aa)) is the Myosin motor domain. Residue 199–206 (GESGAGKT) coordinates ATP. Residues 671–681 (AHFIRCLKPNE) are actin-binding. Residues 810-1171 (IHFLTRLESN…CFEACAPDRP (362 aa)) form a tail region.

Belongs to the TRAFAC class myosin-kinesin ATPase superfamily. Myosin family.

It is found in the cytoplasm. Functionally, myosins are actin-based motor molecules with ATPase activity. Unconventional myosins serve in intracellular movements. Their highly divergent tails are presumed to bind to membranous compartments, which would be moved relative to actin filaments. Plays a role in proper daughter cell budding and separation. The protein is Myosin-B/C of Toxoplasma gondii.